The chain runs to 74 residues: ATP synthase subunit c (74 aa).

2 helical membrane-spanning segments follow: residues 8-28 (FIGT…VSNI) and 52-72 (IGAG…MLLI).

It belongs to the ATPase C chain family. As to quaternary structure, F-type ATPases have 2 components, F(1) - the catalytic core - and F(0) - the membrane proton channel. F(1) has five subunits: alpha(3), beta(3), gamma(1), delta(1), epsilon(1). F(0) has three main subunits: a(1), b(2) and c(10-14). The alpha and beta chains form an alternating ring which encloses part of the gamma chain. F(1) is attached to F(0) by a central stalk formed by the gamma and epsilon chains, while a peripheral stalk is formed by the delta and b chains.

Its subcellular location is the cell inner membrane. In terms of biological role, f(1)F(0) ATP synthase produces ATP from ADP in the presence of a proton or sodium gradient. F-type ATPases consist of two structural domains, F(1) containing the extramembraneous catalytic core and F(0) containing the membrane proton channel, linked together by a central stalk and a peripheral stalk. During catalysis, ATP synthesis in the catalytic domain of F(1) is coupled via a rotary mechanism of the central stalk subunits to proton translocation. Functionally, key component of the F(0) channel; it plays a direct role in translocation across the membrane. A homomeric c-ring of between 10-14 subunits forms the central stalk rotor element with the F(1) delta and epsilon subunits. This Rickettsia conorii (strain ATCC VR-613 / Malish 7) protein is ATP synthase subunit c.